We begin with the raw amino-acid sequence, 319 residues long: Geranylgeranyl pyrophosphate synthase (319 aa).

Residues Lys-42, Arg-45, and His-74 each contribute to the isopentenyl diphosphate site. The Mg(2+) site is built by Asp-81 and Asp-85. Position 90 (Arg-90) interacts with dimethylallyl diphosphate. An isopentenyl diphosphate-binding site is contributed by Arg-91. Lys-172, Thr-173, Gln-210, Lys-226, and Lys-236 together coordinate dimethylallyl diphosphate.

The protein belongs to the FPP/GGPP synthase family. In terms of assembly, homodimer. Mg(2+) is required as a cofactor.

It catalyses the reaction isopentenyl diphosphate + dimethylallyl diphosphate = (2E)-geranyl diphosphate + diphosphate. The enzyme catalyses isopentenyl diphosphate + (2E)-geranyl diphosphate = (2E,6E)-farnesyl diphosphate + diphosphate. The catalysed reaction is isopentenyl diphosphate + (2E,6E)-farnesyl diphosphate = (2E,6E,10E)-geranylgeranyl diphosphate + diphosphate. Its pathway is isoprenoid biosynthesis; geranyl diphosphate biosynthesis; geranyl diphosphate from dimethylallyl diphosphate and isopentenyl diphosphate: step 1/1. It participates in isoprenoid biosynthesis; farnesyl diphosphate biosynthesis; farnesyl diphosphate from geranyl diphosphate and isopentenyl diphosphate: step 1/1. It functions in the pathway isoprenoid biosynthesis; geranylgeranyl diphosphate biosynthesis; geranylgeranyl diphosphate from farnesyl diphosphate and isopentenyl diphosphate: step 1/1. Its function is as follows. Catalyzes the addition of 3 molecules of isopentenyl diphosphate (IPP) onto dimethylallyl diphosphate (DMAPP) to form geranylgeranyl pyrophosphate (GGPP). Catalyzes the synthesis of geranylgeranyl pyrophosphate as a major product and of farnesyl pyrophosphate in smaller amounts. This chain is Geranylgeranyl pyrophosphate synthase, found in Geoglobus acetivorans.